Here is a 141-residue protein sequence, read N- to C-terminus: Large ribosomal subunit protein uL11 (141 aa).

This sequence belongs to the universal ribosomal protein uL11 family. Part of the ribosomal stalk of the 50S ribosomal subunit. Interacts with L10 and the large rRNA to form the base of the stalk. L10 forms an elongated spine to which L12 dimers bind in a sequential fashion forming a multimeric L10(L12)X complex. In terms of processing, one or more lysine residues are methylated.

In terms of biological role, forms part of the ribosomal stalk which helps the ribosome interact with GTP-bound translation factors. The sequence is that of Large ribosomal subunit protein uL11 from Brevibacillus brevis (strain 47 / JCM 6285 / NBRC 100599).